The following is a 534-amino-acid chain: High affinity cGMP-specific 3',5'-cyclic phosphodiesterase 9A (534 aa).

A PDEase domain is found at 175-496 (PRRDVPTYPK…EHYEELKQLD (322 aa)). H251 (proton donor) is an active-site residue. 251-255 (HNFRH) serves as a coordination point for 3',5'-cyclic GMP. The Zn(2+) site is built by H255, H291, and D292. D292 provides a ligand contact to 3',5'-cyclic GMP. D292 serves as a coordination point for Mg(2+). S318 is modified (phosphoserine). Residues D401, Y423, and 451-452 (AQ) contribute to the 3',5'-cyclic GMP site. Residue D401 coordinates Zn(2+). The disordered stretch occupies residues 500–534 (KELQKKTESLTSGAPENTTEKNRDAKDSEGHSPPN). A compositionally biased stretch (basic and acidic residues) spans 517 to 534 (TTEKNRDAKDSEGHSPPN).

Belongs to the cyclic nucleotide phosphodiesterase family. PDE9 subfamily. Homodimer. It depends on Zn(2+) as a cofactor. Mg(2+) serves as cofactor. As to expression, highly expressed in kidney. Lower levels in liver, lung and brain. Widely expressed in brain, with highest expression in cerebellar Purkinje cells. Present in heart (at protein level).

The protein localises to the cell projection. Its subcellular location is the ruffle membrane. It localises to the cytoplasm. The protein resides in the perinuclear region. It is found in the golgi apparatus. The protein localises to the endoplasmic reticulum. Its subcellular location is the cell membrane. It localises to the sarcolemma. The catalysed reaction is 3',5'-cyclic GMP + H2O = GMP + H(+). It functions in the pathway purine metabolism; 3',5'-cyclic GMP degradation; GMP from 3',5'-cyclic GMP: step 1/1. Inhibited by SCH 51866 and moderately, by zaprinast. Specifically inhibited by PF-04447943 (6-[(3S,4S)-4-methyl-1-(pyrimidin-2-ylmethyl)pyrrolidin-3-yl]-1-(tetrahydro-2H-pyran-4-yl)-1,5-dihydro-4H-pyrazolo[3,4-d]pyrimidin-4-one). Specifically hydrolyzes the second messenger cGMP, which is a key regulator of many important physiological processes. Highly specific: compared to other members of the cyclic nucleotide phosphodiesterase family, has the highest affinity and selectivity for cGMP. Specifically regulates natriuretic-peptide-dependent cGMP signaling in heart, acting as a regulator of cardiac hypertrophy in myocytes and muscle. Does not regulate nitric oxide-dependent cGMP in heart. Additional experiments are required to confirm whether its ability to hydrolyze natriuretic-peptide-dependent cGMP is specific to heart or is a general feature of the protein. In brain, involved in cognitive function, such as learning and long-term memory. The protein is High affinity cGMP-specific 3',5'-cyclic phosphodiesterase 9A (Pde9a) of Mus musculus (Mouse).